Consider the following 431-residue polypeptide: MIAKPEREQIIALINREVVPAIGCTEPIAVALCVAKATETLGKRPERIKALLSANILKNAMGVGIPGTGMIGLPIAIALGALIGKSEYQLEVLKDSTPDAVAEGKKLIDSQAISIGLKENIEEKLYIEIICEADGDTATAIIACGHTNFIYVALNNQVLLNKQTTSTCNEDAKEPELNLRKVYDFATTTPLDEIRFILETKRLNKAAAERSFKGNYGHELGKILKSSKSEEQILGSNTFTHILSYTSAACDARMAGAMIPVMSNSGSGNQGITATLPVVVYAEDNHKSEEELIRALTLSHLTAIYIKQSLGRLSALCGCVVAATGSSCGITYLMGGTYEQITFAVQNMIANLTGMICDGAKPSCALKLSSGVSTAVFSAILAMEHKCVSSVEGIIDNDVDRSIRNLTRIGSQGMNETDKLVLDIMTHKQCD.

Belongs to the UPF0597 family.

The sequence is that of UPF0597 protein BVU_2091 from Phocaeicola vulgatus (strain ATCC 8482 / DSM 1447 / JCM 5826 / CCUG 4940 / NBRC 14291 / NCTC 11154) (Bacteroides vulgatus).